Reading from the N-terminus, the 633-residue chain is DNA mismatch repair protein MutL (633 aa).

Disordered stretches follow at residues 336–364 and 384–405; these read VRPD…GEFG and GWSG…TRPE. Residues 388-401 show a composition bias toward low complexity; it reads GASSSGASSGYSAY.

Belongs to the DNA mismatch repair MutL/HexB family.

In terms of biological role, this protein is involved in the repair of mismatches in DNA. It is required for dam-dependent methyl-directed DNA mismatch repair. May act as a 'molecular matchmaker', a protein that promotes the formation of a stable complex between two or more DNA-binding proteins in an ATP-dependent manner without itself being part of a final effector complex. The chain is DNA mismatch repair protein MutL from Pseudomonas paraeruginosa (strain DSM 24068 / PA7) (Pseudomonas aeruginosa (strain PA7)).